We begin with the raw amino-acid sequence, 155 residues long: Transcription antitermination protein NusB (155 aa).

It belongs to the NusB family.

In terms of biological role, involved in transcription antitermination. Required for transcription of ribosomal RNA (rRNA) genes. Binds specifically to the boxA antiterminator sequence of the ribosomal RNA (rrn) operons. This is Transcription antitermination protein NusB from Ralstonia pickettii (strain 12J).